A 625-amino-acid polypeptide reads, in one-letter code: ATP-binding cassette sub-family F member 2 (625 aa).

The tract at residues 1–54 (MPSDLAKKKAAKKKEAAKARQRPRKGHEENGDAITEPQVAEERNEEANGRETTE) is disordered. Residues 40 to 54 (AEERNEEANGRETTE) are compositionally biased toward basic and acidic residues. ABC transporter domains are found at residues 88 to 327 (AHII…ENQM) and 398 to 615 (IMVQ…VGEE). 120 to 127 (GLNGIGKS) is an ATP binding site. At T220 the chain carries Phosphothreonine. Position 306 is an N6-acetyllysine (K306). 432–439 (GPNGAGKS) contacts ATP. A Phosphoserine modification is found at S514.

The protein belongs to the ABC transporter superfamily. ABCF family. EF3 subfamily.

This chain is ATP-binding cassette sub-family F member 2 (ABCF2), found in Bos taurus (Bovine).